A 312-amino-acid chain; its full sequence is GATA transcription factor 6 (312 aa).

3 disordered regions span residues 1–33, 56–77, and 136–186; these read MESV…VDDL, QRKR…STAD, and KSQH…PLWL. Over residues 56-71 the composition is skewed to basic and acidic residues; sequence QRKRGVSDENTLHRSN. The span at 142 to 151 shows a compositional bias: basic residues; the sequence is VKTRPKRART. Positions 143–150 match the Nuclear localization signal motif; that stretch reads KTRPKRAR. Residues 157–186 are compositionally biased toward low complexity; it reads SHGSQSLTDSSSSSTTSSSSSPRPSSPLWL. Residues 217–271 form a GATA-type zinc finger; it reads QTQTRQCGHCGVQKTPQWRAGPLGAKTLCNACGVRYKSGRLLPEYRPACSPTFSS.

This sequence belongs to the type IV zinc-finger family. Class A subfamily.

Its subcellular location is the nucleus. Transcriptional activator that specifically binds 5'-GATA-3' or 5'-GAT-3' motifs within gene promoters. May be involved in the regulation of some light-responsive genes. This Arabidopsis thaliana (Mouse-ear cress) protein is GATA transcription factor 6 (GATA6).